A 615-amino-acid chain; its full sequence is Dihydroxy-acid dehydratase (615 aa).

D81 serves as a coordination point for Mg(2+). Residue C122 coordinates [2Fe-2S] cluster. Mg(2+) contacts are provided by D123 and K124. The residue at position 124 (K124) is an N6-carboxylysine. C193 provides a ligand contact to [2Fe-2S] cluster. Position 489 (E489) interacts with Mg(2+). The active-site Proton acceptor is S515.

This sequence belongs to the IlvD/Edd family. As to quaternary structure, homodimer. Requires [2Fe-2S] cluster as cofactor. The cofactor is Mg(2+).

It carries out the reaction (2R)-2,3-dihydroxy-3-methylbutanoate = 3-methyl-2-oxobutanoate + H2O. It catalyses the reaction (2R,3R)-2,3-dihydroxy-3-methylpentanoate = (S)-3-methyl-2-oxopentanoate + H2O. It participates in amino-acid biosynthesis; L-isoleucine biosynthesis; L-isoleucine from 2-oxobutanoate: step 3/4. The protein operates within amino-acid biosynthesis; L-valine biosynthesis; L-valine from pyruvate: step 3/4. Functionally, functions in the biosynthesis of branched-chain amino acids. Catalyzes the dehydration of (2R,3R)-2,3-dihydroxy-3-methylpentanoate (2,3-dihydroxy-3-methylvalerate) into 2-oxo-3-methylpentanoate (2-oxo-3-methylvalerate) and of (2R)-2,3-dihydroxy-3-methylbutanoate (2,3-dihydroxyisovalerate) into 2-oxo-3-methylbutanoate (2-oxoisovalerate), the penultimate precursor to L-isoleucine and L-valine, respectively. The sequence is that of Dihydroxy-acid dehydratase from Pseudomonas savastanoi pv. phaseolicola (strain 1448A / Race 6) (Pseudomonas syringae pv. phaseolicola (strain 1448A / Race 6)).